A 302-amino-acid polypeptide reads, in one-letter code: MTNISLDKLVTESRNENTKNIDRVETLEMLKMINNEDKKVAEAVEKELIHIAKAVDKIGEAFLNGGRLIYVGAGTSGRLGVLDASECPPTYGVSYDLVRGIIAGGESAMFKAREGAEDSKKLCIKDLKNINFGKNDILAGIAASGRTPYVIGGLEYANGIGATTISVTCNPESEMSKIANISIAPVVGPEAITGSTRMKAGTAQKMVLNMLSTGAMVKTGKVYGNLMVDLKATNEKLVERAKRIVMQATGSKREQVEKILKETNFDVKLSIFMIESSLDKIKAKEILDKNKGYIVEAIKEIS.

The SIS domain occupies 58–221 (IGEAFLNGGR…STGAMVKTGK (164 aa)). Glutamate 86 acts as the Proton donor in catalysis. Glutamate 117 is an active-site residue.

The protein belongs to the GCKR-like family. MurNAc-6-P etherase subfamily. As to quaternary structure, homodimer.

It catalyses the reaction N-acetyl-D-muramate 6-phosphate + H2O = N-acetyl-D-glucosamine 6-phosphate + (R)-lactate. Its pathway is amino-sugar metabolism; N-acetylmuramate degradation. Its function is as follows. Specifically catalyzes the cleavage of the D-lactyl ether substituent of MurNAc 6-phosphate, producing GlcNAc 6-phosphate and D-lactate. The polypeptide is N-acetylmuramic acid 6-phosphate etherase (Clostridium botulinum (strain Hall / ATCC 3502 / NCTC 13319 / Type A)).